Here is a 161-residue protein sequence, read N- to C-terminus: Phosphopantetheine adenylyltransferase (161 aa).

Position 10 (Thr10) interacts with substrate. Residues 10 to 11 and His18 contribute to the ATP site; that span reads TF. Residues Lys42, Leu74, and Arg88 each coordinate substrate. ATP is bound by residues 89-91, Glu99, and 123-129; these read GVR and YIHISST.

Belongs to the bacterial CoaD family. In terms of assembly, homohexamer. It depends on Mg(2+) as a cofactor.

The protein localises to the cytoplasm. It catalyses the reaction (R)-4'-phosphopantetheine + ATP + H(+) = 3'-dephospho-CoA + diphosphate. The protein operates within cofactor biosynthesis; coenzyme A biosynthesis; CoA from (R)-pantothenate: step 4/5. In terms of biological role, reversibly transfers an adenylyl group from ATP to 4'-phosphopantetheine, yielding dephospho-CoA (dPCoA) and pyrophosphate. This Aquifex aeolicus (strain VF5) protein is Phosphopantetheine adenylyltransferase.